Reading from the N-terminus, the 284-residue chain is L-ribulose-5-phosphate 3-epimerase UlaE (284 aa).

The protein belongs to the L-ribulose-5-phosphate 3-epimerase family.

The enzyme catalyses L-ribulose 5-phosphate = L-xylulose 5-phosphate. It functions in the pathway cofactor degradation; L-ascorbate degradation; D-xylulose 5-phosphate from L-ascorbate: step 3/4. Catalyzes the isomerization of L-xylulose-5-phosphate to L-ribulose-5-phosphate. Is involved in the anaerobic L-ascorbate utilization. The polypeptide is L-ribulose-5-phosphate 3-epimerase UlaE (Escherichia coli O157:H7 (strain EC4115 / EHEC)).